We begin with the raw amino-acid sequence, 164 residues long: Large ribosomal subunit protein uL10 (164 aa).

This sequence belongs to the universal ribosomal protein uL10 family. Part of the ribosomal stalk of the 50S ribosomal subunit. The N-terminus interacts with L11 and the large rRNA to form the base of the stalk. The C-terminus forms an elongated spine to which L12 dimers bind in a sequential fashion forming a multimeric L10(L12)X complex.

Forms part of the ribosomal stalk, playing a central role in the interaction of the ribosome with GTP-bound translation factors. The protein is Large ribosomal subunit protein uL10 of Photobacterium profundum (strain SS9).